The sequence spans 190 residues: Protein GrpE (190 aa).

Disordered stretches follow at residues 1–22 (MAEE…GQTI) and 170–190 (EEGE…KPQS). Residues 181 to 190 (ARVKVGKPQS) show a composition bias toward basic residues.

The protein belongs to the GrpE family. In terms of assembly, homodimer.

Its subcellular location is the cytoplasm. Its function is as follows. Participates actively in the response to hyperosmotic and heat shock by preventing the aggregation of stress-denatured proteins, in association with DnaK and GrpE. It is the nucleotide exchange factor for DnaK and may function as a thermosensor. Unfolded proteins bind initially to DnaJ; upon interaction with the DnaJ-bound protein, DnaK hydrolyzes its bound ATP, resulting in the formation of a stable complex. GrpE releases ADP from DnaK; ATP binding to DnaK triggers the release of the substrate protein, thus completing the reaction cycle. Several rounds of ATP-dependent interactions between DnaJ, DnaK and GrpE are required for fully efficient folding. The polypeptide is Protein GrpE (Leptospira biflexa serovar Patoc (strain Patoc 1 / Ames)).